Consider the following 452-residue polypeptide: Tubulin alpha-8 chain (452 aa).

The GTP site is built by Q15, E74, S143, G147, T148, T182, N209, and N231. E74 is a binding site for Mg(2+). Residue E257 is part of the active site.

It belongs to the tubulin family. As to quaternary structure, dimer of alpha and beta chains. A typical microtubule is a hollow water-filled tube with an outer diameter of 25 nm and an inner diameter of 15 nM. Alpha-beta heterodimers associate head-to-tail to form protofilaments running lengthwise along the microtubule wall with the beta-tubulin subunit facing the microtubule plus end conferring a structural polarity. Microtubules usually have 13 protofilaments but different protofilament numbers can be found in some organisms and specialized cells. Mg(2+) serves as cofactor.

It is found in the cytoplasm. The protein localises to the cytoskeleton. The enzyme catalyses GTP + H2O = GDP + phosphate + H(+). Tubulin is the major constituent of microtubules, a cylinder consisting of laterally associated linear protofilaments composed of alpha- and beta-tubulin heterodimers. Microtubules grow by the addition of GTP-tubulin dimers to the microtubule end, where a stabilizing cap forms. Below the cap, tubulin dimers are in GDP-bound state, owing to GTPase activity of alpha-tubulin. The protein is Tubulin alpha-8 chain (tba-8) of Caenorhabditis elegans.